Reading from the N-terminus, the 388-residue chain is Mitochondrial distribution and morphology protein 12 (388 aa).

The region spanning 1-388 (MSLDINWSLL…VFPNFHTVAL (388 aa)) is the SMP-LTD domain. 2 disordered regions span residues 75 to 101 (DDEGDFAEEEKQREKEREERDKLRNEA) and 209 to 251 (PMSI…SSSS). A compositionally biased stretch (basic and acidic residues) spans 83–101 (EEKQREKEREERDKLRNEA). Positions 234-243 (PSPPAHPAGL) are enriched in pro residues.

It belongs to the MDM12 family. Component of the ER-mitochondria encounter structure (ERMES) or MDM complex, composed of MMM1, MDM10, MDM12 and MDM34. An MMM1 homodimer associates with one molecule of MDM12 on each side in a pairwise head-to-tail manner, and the SMP-LTD domains of MMM1 and MDM12 generate a continuous hydrophobic tunnel for phospholipid trafficking.

Its subcellular location is the mitochondrion outer membrane. It is found in the endoplasmic reticulum membrane. Its function is as follows. Component of the ERMES/MDM complex, which serves as a molecular tether to connect the endoplasmic reticulum (ER) and mitochondria. Components of this complex are involved in the control of mitochondrial shape and protein biogenesis, and function in nonvesicular lipid trafficking between the ER and mitochondria. MDM12 is required for the interaction of the ER-resident membrane protein MMM1 and the outer mitochondrial membrane-resident beta-barrel protein MDM10. The MDM12-MMM1 subcomplex functions in the major beta-barrel assembly pathway that is responsible for biogenesis of all mitochondrial outer membrane beta-barrel proteins, and acts in a late step after the SAM complex. The MDM10-MDM12-MMM1 subcomplex further acts in the TOM40-specific pathway after the action of the MDM12-MMM1 complex. Essential for establishing and maintaining the structure of mitochondria and maintenance of mtDNA nucleoids. The polypeptide is Mitochondrial distribution and morphology protein 12 (Cryptococcus neoformans var. neoformans serotype D (strain B-3501A) (Filobasidiella neoformans)).